The chain runs to 98 residues: Small ribosomal subunit protein uS19 (98 aa).

The interval F74 to K98 is disordered.

This sequence belongs to the universal ribosomal protein uS19 family.

Its function is as follows. Protein S19 forms a complex with S13 that binds strongly to the 16S ribosomal RNA. The polypeptide is Small ribosomal subunit protein uS19 (Chlorobium chlorochromatii (strain CaD3)).